The following is a 375-amino-acid chain: MQKLAVYVYIYLFMQIAVDPVALDGSSQPTENAEKDGLCNACTWRQNTKSSRIEAIKIQILSKLRLEQAPNISRDVIKQLLPKAPPLQELIDQYDVQRDDSSDGSLEDDDYHATTETIITMPTESDFLVQMEGKPKCCFFKFSSKIQYNKVVKAQLWIYLRQVQKPTTVFVQILRLIKPMKDGTRYTGIRSLKLDMNPGTGIWQSIDVKTVLQNWLKQPESNLGIEIKAFDETGRDLAVTFPGPGEDGLNPFLEVRVTDTPKRSRRDFGLDCDEHSTESRCCRYPLTVDFEAFGWDWIIAPKRYKANYCSGECEFVFLQKYPHTHLVHQANPRGSAGPCCTPTKMSPINMLYFNGKEQIIYGKIPAMVVDRCGCS.

The first 23 residues, 1-23 (MQKLAVYVYIYLFMQIAVDPVAL), serve as a signal peptide directing secretion. A propeptide spanning residues 24-266 (DGSSQPTENA…VTDTPKRSRR (243 aa)) is cleaved from the precursor. N-linked (GlcNAc...) asparagine glycosylation occurs at asparagine 71. Cystine bridges form between cysteine 272–cysteine 282, cysteine 281–cysteine 340, cysteine 309–cysteine 372, and cysteine 313–cysteine 374.

Belongs to the TGF-beta family. As to quaternary structure, homodimer; disulfide-linked.

The protein localises to the secreted. In terms of biological role, acts specifically as a negative regulator of skeletal muscle growth. The sequence is that of Growth/differentiation factor 8 (MSTN) from Gallus gallus (Chicken).